Reading from the N-terminus, the 72-residue chain is uncharacterized protein (72 aa).

This is an uncharacterized protein from Vaccinia virus (strain Copenhagen) (VACV).